The sequence spans 364 residues: Ferrochelatase (364 aa).

Residues His-210 and Glu-291 each coordinate Fe cation.

The protein belongs to the ferrochelatase family.

Its subcellular location is the cytoplasm. It carries out the reaction heme b + 2 H(+) = protoporphyrin IX + Fe(2+). It participates in porphyrin-containing compound metabolism; protoheme biosynthesis; protoheme from protoporphyrin-IX: step 1/1. Functionally, catalyzes the ferrous insertion into protoporphyrin IX. This chain is Ferrochelatase, found in Idiomarina loihiensis (strain ATCC BAA-735 / DSM 15497 / L2-TR).